A 508-amino-acid chain; its full sequence is UTP--glucose-1-phosphate uridylyltransferase (508 aa).

Ser2 carries the blocked amino end (Ser) modification. Residue Ser13 is modified to Phosphoserine. Residues 113–116, Lys127, Gln190, and Gly222 each bind UTP; that span reads LNGG. Residue 115–116 participates in substrate binding; it reads GG. Residue Lys127 coordinates Mg(2+). Substrate is bound by residues His223 and 251 to 253; that span reads NID. Residues Asp253 and Lys396 each contribute to the UTP site. Asp253 contributes to the Mg(2+) binding site. Lys396 is an active-site residue. Thr426 carries the post-translational modification Phosphothreonine. Ser434 is subject to Phosphoserine. N6-acetyllysine is present on Lys438. A phosphoserine mark is found at Ser448 and Ser461. Residues 457-508 form an oligomerization region; the sequence is HLTVSGDVTFGKNVSLKGTVIIIANHGDRIDIPPGAVLENKIVSGNLRILDH. A critical for end-to-end subunit interaction region spans residues 502 to 503; it reads NL.

The protein belongs to the UDPGP type 1 family. In terms of assembly, homooctamer.

The protein localises to the cytoplasm. The catalysed reaction is alpha-D-glucose 1-phosphate + UTP + H(+) = UDP-alpha-D-glucose + diphosphate. It functions in the pathway glycan biosynthesis; glycogen biosynthesis. In terms of biological role, UTP--glucose-1-phosphate uridylyltransferase catalyzing the conversion of glucose-1-phosphate into UDP-glucose, a crucial precursor for the production of glycogen. The protein is UTP--glucose-1-phosphate uridylyltransferase (UGP2) of Bos taurus (Bovine).